The sequence spans 320 residues: 1,5-anhydro-D-fructose reductase (320 aa).

Catalysis depends on tyrosine 40, which acts as the Proton donor. Histidine 102 serves as a coordination point for substrate. NADP(+)-binding positions include glutamine 194 and 265–277 (IPGS…IKEN).

It belongs to the aldo/keto reductase family. Monomer.

It localises to the cytoplasm. It carries out the reaction 1,5-anhydro-D-glucitol + NADP(+) = 1,5-anhydro-D-fructose + NADPH + H(+). With respect to regulation, inhibited by p-chloromercuribenzoic acid and alkyliodines. Catalyzes the NADPH-dependent reduction of 1,5-anhydro-D-fructose (AF) to 1,5-anhydro-D-glucitol. The protein is 1,5-anhydro-D-fructose reductase (AKR1E2) of Macaca fascicularis (Crab-eating macaque).